Here is a 187-residue protein sequence, read N- to C-terminus: Elongation factor P (187 aa).

Belongs to the elongation factor P family.

It localises to the cytoplasm. It functions in the pathway protein biosynthesis; polypeptide chain elongation. Functionally, involved in peptide bond synthesis. Stimulates efficient translation and peptide-bond synthesis on native or reconstituted 70S ribosomes in vitro. Probably functions indirectly by altering the affinity of the ribosome for aminoacyl-tRNA, thus increasing their reactivity as acceptors for peptidyl transferase. The protein is Elongation factor P of Prochlorococcus marinus (strain NATL2A).